Here is a 189-residue protein sequence, read N- to C-terminus: MKILANAIREGNILEYQNNLWIVSKKPDHTKPGKGGAYIQLEMKNLKTGTKIYERFSSSDYLEKATLEQRNYQYLYQENNHLVLMDLESFEQILVQKSIIASNKLPFLLENTVITVETYKDEPIRLVLPHTVVVEILETSPNIKGATVTASYKPAILSNGAKIMVPPYLSAGEKIVVKLEDISFVERAK.

Belongs to the elongation factor P family.

It localises to the cytoplasm. It participates in protein biosynthesis; polypeptide chain elongation. Involved in peptide bond synthesis. Stimulates efficient translation and peptide-bond synthesis on native or reconstituted 70S ribosomes in vitro. Probably functions indirectly by altering the affinity of the ribosome for aminoacyl-tRNA, thus increasing their reactivity as acceptors for peptidyl transferase. The chain is Elongation factor P from Orientia tsutsugamushi (strain Ikeda) (Rickettsia tsutsugamushi).